A 104-amino-acid chain; its full sequence is Large ribosomal subunit protein bL21c (104 aa).

Belongs to the bacterial ribosomal protein bL21 family. In terms of assembly, part of the 50S ribosomal subunit.

It localises to the plastid. Its subcellular location is the chloroplast. In terms of biological role, this protein binds to 23S rRNA. The chain is Large ribosomal subunit protein bL21c from Guillardia theta (Cryptophyte).